A 41-amino-acid polypeptide reads, in one-letter code: Augerpeptide-s11a (41 aa).

Post-translationally, contains 4 disulfide bonds. As to expression, expressed by the venom duct.

Its subcellular location is the secreted. Its function is as follows. Does not elicit any observable symptomatology in C.elegans. The protein is Augerpeptide-s11a of Terebra subulata (Chocolate spotted auger).